A 58-amino-acid polypeptide reads, in one-letter code: Small ribosomal subunit protein bS21 (58 aa).

The disordered stretch occupies residues 27–58 (GTLQELRKREHYEKPSVKRKRKSEAARKRKKY). The segment covering 31–42 (ELRKREHYEKPS) has biased composition (basic and acidic residues). A compositionally biased stretch (basic residues) spans 43 to 58 (VKRKRKSEAARKRKKY).

This sequence belongs to the bacterial ribosomal protein bS21 family.

This chain is Small ribosomal subunit protein bS21 (rpsU), found in Lactococcus lactis subsp. lactis (strain IL1403) (Streptococcus lactis).